A 418-amino-acid polypeptide reads, in one-letter code: Trans-acting enoyl reductase (418 aa).

Belongs to the saccharopine dehydrogenase family. Enoyl reductase subfamily.

Its function is as follows. Involved in the reduction of the double bond between C-4 and C-5 during phthiocerol dimycocerosates (DIM A) and glycosylated phenolphthiocerol dimycocerosates (PGL) biosynthesis. This chain is Trans-acting enoyl reductase, found in Mycobacterium leprae (strain TN).